The sequence spans 507 residues: Eukaryotic translation initiation factor 4E-binding protein Mextli homolog (507 aa).

The tract at residues 126–163 is disordered; the sequence is RPEGQHDPAPTVGIPPSATSPPTQVTSSVTSPVPSSPQ. Low complexity predominate over residues 140-158; sequence PPSATSPPTQVTSSVTSPV. A KH domain is found at 242 to 307; sequence QLRHEMIIRN…EDIERAKDMI (66 aa). 2 disordered regions span residues 314–360 and 395–424; these read NMSP…DEDI and ARPS…QQEP. Residues 329–348 are compositionally biased toward polar residues; it reads QYSGMSSENQSIPSQQNTAN. Residues 349-360 show a composition bias toward acidic residues; sequence IDEDDDDDDEDI.

In terms of assembly, interacts with eukaryotic translation initiation factor ife-3.

The protein localises to the cytoplasm. Plays a role in promoting translation. The polypeptide is Eukaryotic translation initiation factor 4E-binding protein Mextli homolog (Caenorhabditis elegans).